Consider the following 206-residue polypeptide: Large ribosomal subunit protein uL4 (206 aa).

A disordered region spans residues 46-77 (GTRAQKDREQVRHSTKKPFKQKGTGNARAGMT).

Belongs to the universal ribosomal protein uL4 family. Part of the 50S ribosomal subunit.

Its function is as follows. One of the primary rRNA binding proteins, this protein initially binds near the 5'-end of the 23S rRNA. It is important during the early stages of 50S assembly. It makes multiple contacts with different domains of the 23S rRNA in the assembled 50S subunit and ribosome. In terms of biological role, forms part of the polypeptide exit tunnel. The chain is Large ribosomal subunit protein uL4 from Paracidovorax citrulli (strain AAC00-1) (Acidovorax citrulli).